The following is a 79-amino-acid chain: uncharacterized protein (79 aa).

A signal peptide spans 1–33; the sequence is MRLSIRAIVLFALVWIGLLMSGYGVLVGSKVNA.

This is an uncharacterized protein from Salmonella paratyphi A (strain ATCC 9150 / SARB42).